The primary structure comprises 347 residues: MNPLAQPIIYSTIFTGTLITALSSHWFFTWVGLEMNMLAFIPILTKKMSPRSTEAATKYFLTQATASMILLMAILSNSMLSGQWTMTNTTNQYPSLMIMMAMAMKLGMAPFHFWVPEVTQGTPLMSGLLLLTWQKLAPISIMYQISSSLNVNLLLTLSILSIMAGSWGGLNQTQLRKILAYSSITHMGWMMAVLPYNPNMTILNLTIYIILTTTAFLLLNLNSSTTTLLLSRTWNKLTWLTPLIPSTLLSLGGLPPLTGFLPKWVIIEEFTKNNSLIIPTIMAIITLLNLYFYLRLIYSTSITLLPMSNNVKMKWQFEHTKPTPFLPTLITLTTLLLPISPFMLMIL.

Transmembrane regions (helical) follow at residues 13–33 (IFTG…WVGL), 60–80 (FLTQ…NSML), 96–116 (LMIM…FWVP), 123–143 (PLMS…SIMY), 149–169 (LNVN…SWGG), 178–198 (ILAY…PYNP), 201–221 (TILN…LLNL), 247–267 (TLLS…WVII), 274–294 (NSLI…YFYL), and 326–346 (LPTL…MLMI).

Belongs to the complex I subunit 2 family. Core subunit of respiratory chain NADH dehydrogenase (Complex I) which is composed of 45 different subunits. Interacts with TMEM242.

It localises to the mitochondrion inner membrane. It carries out the reaction a ubiquinone + NADH + 5 H(+)(in) = a ubiquinol + NAD(+) + 4 H(+)(out). Core subunit of the mitochondrial membrane respiratory chain NADH dehydrogenase (Complex I) which catalyzes electron transfer from NADH through the respiratory chain, using ubiquinone as an electron acceptor. Essential for the catalytic activity and assembly of complex I. This is NADH-ubiquinone oxidoreductase chain 2 from Pan troglodytes (Chimpanzee).